The sequence spans 528 residues: FAD-dependent monooxygenase DEP2 (528 aa).

An N-terminal signal peptide occupies residues 1–23 (MEDGRSTFKVIIIGAGVTGLTLA). FAD contacts are provided by Asp-37, Arg-110, Asp-311, and Gly-324. A helical transmembrane segment spans residues 479–499 (VFPQILGVLMVMWSSVWLFHL). Asn-521 carries N-linked (GlcNAc...) asparagine glycosylation.

It belongs to the paxM FAD-dependent monooxygenase family. Requires FAD as cofactor.

It is found in the membrane. Its pathway is polyketide biosynthesis. Functionally, FAD-dependent monooxygenase; part of the gene cluster that mediates the biosynthesis of depudecin, a highly oxidized eleven-carbon linear polyketide that acts as a histone deacetylase (HDAC) inhibitor and makes a small contribution to pathogenesis. The reducing polyketide synthase DEP5 is the central enzyme in depudecin biosynthesis by yielding the backbone polyketide chain. The monooxygenases DEP2 and DEP4, as well as the uncharacterized protein DEP1, then act as tailoring enzymes to modify the intermediate polyketide chain into depudecin. This chain is FAD-dependent monooxygenase DEP2, found in Alternaria brassicicola (Dark leaf spot agent).